Reading from the N-terminus, the 516-residue chain is GMP synthase [glutamine-hydrolyzing] (516 aa).

One can recognise a Glutamine amidotransferase type-1 domain in the interval serine 7 to aspartate 203. The active-site Nucleophile is cysteine 84. Active-site residues include histidine 177 and glutamate 179. In terms of domain architecture, GMPS ATP-PPase spans tryptophan 204–arginine 391. Serine 231–threonine 237 contacts ATP.

Homodimer.

The enzyme catalyses XMP + L-glutamine + ATP + H2O = GMP + L-glutamate + AMP + diphosphate + 2 H(+). The protein operates within purine metabolism; GMP biosynthesis; GMP from XMP (L-Gln route): step 1/1. Its function is as follows. Catalyzes the synthesis of GMP from XMP. In Chlorobaculum tepidum (strain ATCC 49652 / DSM 12025 / NBRC 103806 / TLS) (Chlorobium tepidum), this protein is GMP synthase [glutamine-hydrolyzing].